The following is a 367-amino-acid chain: Mitogen-activated protein kinase 12 (367 aa).

The 285-residue stretch at 27 to 311 folds into the Protein kinase domain; it reads YQDLQPVGSG…AAEALAHPYF (285 aa). ATP-binding positions include 33 to 41 and Lys-56; that span reads VGSGAYGAV. Asp-153 functions as the Proton acceptor in the catalytic mechanism. Thr-183 carries the phosphothreonine; by MAP2K3 and MAP2K6 modification. A TXY motif is present at residues 183–185; that stretch reads TGY. Tyr-185 is modified (phosphotyrosine; by MAP2K3 and MAP2K6).

This sequence belongs to the protein kinase superfamily. CMGC Ser/Thr protein kinase family. MAP kinase subfamily. Monomer. Interacts with the PDZ domain of the syntrophin SNTA1. Interacts with LIN7C, SCRIB, SYNJ2BP and SH3BP5. Interacts with PTPN4; this interaction induces the activation of PTPN4 phosphatase activity. Requires Mg(2+) as cofactor. In terms of processing, dually phosphorylated on Thr-183 and Tyr-185 by MAP2K3/MKK3 and MAP2K6/MKK6, which activates the enzyme. Ubiquitinated. Ubiquitination leads to degradation by the proteasome pathway. In terms of tissue distribution, highly expressed in skeletal muscle, lung and testes and also in the heart and thymus of both adult and neonatal rats.

The protein resides in the cytoplasm. It localises to the nucleus. It is found in the mitochondrion. The catalysed reaction is L-seryl-[protein] + ATP = O-phospho-L-seryl-[protein] + ADP + H(+). The enzyme catalyses L-threonyl-[protein] + ATP = O-phospho-L-threonyl-[protein] + ADP + H(+). Activated by phosphorylation on threonine and tyrosine. MAP2K3/MKK3 and MAP2K6/MKK6 are both essential for the activation of MAPK12 induced by environmental stress, whereas MAP2K6/MKK6 is the major MAPK12 activator in response to TNF-alpha. Functionally, serine/threonine kinase which acts as an essential component of the MAP kinase signal transduction pathway. MAPK12 is one of the four p38 MAPKs which play an important role in the cascades of cellular responses evoked by extracellular stimuli such as pro-inflammatory cytokines or physical stress leading to direct activation of transcription factors such as ELK1 and ATF2. Accordingly, p38 MAPKs phosphorylate a broad range of proteins and it has been estimated that they may have approximately 200 to 300 substrates each. Some of the targets are downstream kinases such as MAPKAPK2, which are activated through phosphorylation and further phosphorylate additional targets. Plays a role in myoblast differentiation and also in the down-regulation of cyclin D1 in response to hypoxia in adrenal cells suggesting MAPK12 may inhibit cell proliferation while promoting differentiation. Phosphorylates DLG1. Following osmotic shock, MAPK12 in the cell nucleus increases its association with nuclear DLG1, thereby causing dissociation of DLG1-SFPQ complexes. This function is independent of its catalytic activity and could affect mRNA processing and/or gene transcription to aid cell adaptation to osmolarity changes in the environment. Regulates UV-induced checkpoint signaling and repair of UV-induced DNA damage and G2 arrest after gamma-radiation exposure. MAPK12 is involved in the regulation of SLC2A1 expression and basal glucose uptake in L6 myotubes; and negatively regulates SLC2A4 expression and contraction-mediated glucose uptake in adult skeletal muscle. C-Jun (JUN) phosphorylation is stimulated by MAPK14 and inhibited by MAPK12, leading to a distinct AP-1 regulation. MAPK12 is required for the normal kinetochore localization of PLK1, prevents chromosomal instability and supports mitotic cell viability. MAPK12-signaling is also positively regulating the expansion of transient amplifying myogenic precursor cells during muscle growth and regeneration. The sequence is that of Mitogen-activated protein kinase 12 (Mapk12) from Rattus norvegicus (Rat).